The sequence spans 306 residues: Ornithine carbamoyltransferase (306 aa).

Residues 53 to 56, glutamine 80, arginine 104, and 131 to 134 contribute to the carbamoyl phosphate site; these read STRT and HPCQ. L-ornithine contacts are provided by residues asparagine 162, aspartate 220, and 224-225; that span reads SM. Carbamoyl phosphate-binding positions include 260–261 and arginine 288; that span reads CL.

It belongs to the aspartate/ornithine carbamoyltransferase superfamily. OTCase family.

The protein resides in the cytoplasm. It carries out the reaction carbamoyl phosphate + L-ornithine = L-citrulline + phosphate + H(+). Its pathway is amino-acid biosynthesis; L-arginine biosynthesis; L-arginine from L-ornithine and carbamoyl phosphate: step 1/3. Its function is as follows. Reversibly catalyzes the transfer of the carbamoyl group from carbamoyl phosphate (CP) to the N(epsilon) atom of ornithine (ORN) to produce L-citrulline. This is Ornithine carbamoyltransferase from Methylobacillus flagellatus (strain ATCC 51484 / DSM 6875 / VKM B-1610 / KT).